Here is a 38-residue protein sequence, read N- to C-terminus: Toxin CSTX-16 (38 aa).

Glutamine amide occurs at positions 19 and 38.

The protein belongs to the cationic peptide 04 (cupiennin) family. 10 (double chain) subfamily. As to expression, expressed by the venom gland.

The protein resides in the secreted. The protein is Toxin CSTX-16 of Cupiennius salei (American wandering spider).